Here is an 89-residue protein sequence, read N- to C-terminus: MATVIAKVKVMPTSPEVEKESLKESLKELVEQNDAKCRGVTDEPLAFGLYTVYVMVEMEEKEGGMDPIEEAMNALENVESAEVVELSLV.

It belongs to the EF-1-beta/EF-1-delta family.

In terms of biological role, promotes the exchange of GDP for GTP in EF-1-alpha/GDP, thus allowing the regeneration of EF-1-alpha/GTP that could then be used to form the ternary complex EF-1-alpha/GTP/AAtRNA. This is Elongation factor 1-beta from Methanococcus maripaludis (strain DSM 14266 / JCM 13030 / NBRC 101832 / S2 / LL).